The chain runs to 466 residues: Adenosylhomocysteinase (466 aa).

Substrate is bound by residues Thr57, Asp132, and Glu192. Position 193 to 195 (193 to 195 (TTT)) interacts with NAD(+). Residues Lys222 and Asp226 each coordinate substrate. NAD(+)-binding positions include Asn227, 256 to 261 (GYGDVG), Glu279, Asn314, 335 to 337 (IGH), and Asn380.

It belongs to the adenosylhomocysteinase family. NAD(+) serves as cofactor.

It localises to the cytoplasm. It catalyses the reaction S-adenosyl-L-homocysteine + H2O = L-homocysteine + adenosine. It participates in amino-acid biosynthesis; L-homocysteine biosynthesis; L-homocysteine from S-adenosyl-L-homocysteine: step 1/1. In terms of biological role, may play a key role in the regulation of the intracellular concentration of adenosylhomocysteine. In Mesorhizobium japonicum (strain LMG 29417 / CECT 9101 / MAFF 303099) (Mesorhizobium loti (strain MAFF 303099)), this protein is Adenosylhomocysteinase.